Consider the following 430-residue polypeptide: Adenylosuccinate synthetase (430 aa).

Residues 12-18 (GDEGKGK) and 40-42 (GHT) contribute to the GTP site. Asp13 (proton acceptor) is an active-site residue. Positions 13 and 40 each coordinate Mg(2+). IMP contacts are provided by residues 13-16 (DEGK), 38-41 (NAGH), Thr128, Arg142, Gln223, Thr238, and Arg302. Catalysis depends on His41, which acts as the Proton donor. 298–304 (TTTGRPR) provides a ligand contact to substrate. GTP contacts are provided by residues Arg304, 330–332 (SID), and 412–414 (SVG).

Belongs to the adenylosuccinate synthetase family. Homodimer. The cofactor is Mg(2+).

The protein localises to the cytoplasm. The catalysed reaction is IMP + L-aspartate + GTP = N(6)-(1,2-dicarboxyethyl)-AMP + GDP + phosphate + 2 H(+). The protein operates within purine metabolism; AMP biosynthesis via de novo pathway; AMP from IMP: step 1/2. In terms of biological role, plays an important role in the de novo pathway of purine nucleotide biosynthesis. Catalyzes the first committed step in the biosynthesis of AMP from IMP. The polypeptide is Adenylosuccinate synthetase (Streptococcus pyogenes serotype M1).